The primary structure comprises 205 residues: Allergen Asp f 15 homolog (205 aa).

Belongs to the cerato-platanin family.

The protein resides in the secreted. This Arthroderma benhamiae (strain ATCC MYA-4681 / CBS 112371) (Trichophyton mentagrophytes) protein is Allergen Asp f 15 homolog.